We begin with the raw amino-acid sequence, 130 residues long: Small ribosomal subunit protein uS9 (130 aa).

The protein belongs to the universal ribosomal protein uS9 family.

This chain is Small ribosomal subunit protein uS9, found in Clostridioides difficile (strain 630) (Peptoclostridium difficile).